Consider the following 259-residue polypeptide: Phosphate import ATP-binding protein PstB (259 aa).

The 244-residue stretch at 5–248 (IDVSGLHVYY…NKIFTKPEKK (244 aa)) folds into the ABC transporter domain. Residue 37–44 (GSSGCGKS) coordinates ATP.

Belongs to the ABC transporter superfamily. Phosphate importer (TC 3.A.1.7) family. The complex is composed of two ATP-binding proteins (PstB), two transmembrane proteins (PstC and PstA) and a solute-binding protein (PstS).

It localises to the cell membrane. It carries out the reaction phosphate(out) + ATP + H2O = ADP + 2 phosphate(in) + H(+). Functionally, part of the ABC transporter complex PstSACB involved in phosphate import. Responsible for energy coupling to the transport system. This Thermobifida fusca (strain YX) protein is Phosphate import ATP-binding protein PstB.